The chain runs to 217 residues: Trimethylamine corrinoid protein 2 (217 aa).

In terms of domain architecture, B12-binding N-terminal spans 1-92 (MAGKEEIIAK…EMEKRKAKTT (92 aa)). The region spanning 94-217 (LGTVIIGTIE…VNKIKAAIKS (124 aa)) is the B12-binding domain. His107 lines the methylcob(III)alamin pocket.

Belongs to the methylamine corrinoid protein family. Can form a complex with MttB.

It participates in one-carbon metabolism; methanogenesis from trimethylamine. Acts probably as a methyl group carrier between MttB and either MtbA or MtaA. In Methanosarcina acetivorans (strain ATCC 35395 / DSM 2834 / JCM 12185 / C2A), this protein is Trimethylamine corrinoid protein 2 (mttC2).